The following is a 336-amino-acid chain: 3-isopropylmalate dehydrogenase (336 aa).

Substrate contacts are provided by Arg-87, Arg-97, Arg-121, and Asp-211. Positions 211, 235, and 239 each coordinate Mg(2+). An NAD(+)-binding site is contributed by 271–283 (GSAPDIAGQGIAD).

This sequence belongs to the isocitrate and isopropylmalate dehydrogenases family. LeuB type 2 subfamily. Homodimer. Mg(2+) serves as cofactor. The cofactor is Mn(2+).

The protein resides in the cytoplasm. It catalyses the reaction (2R,3S)-3-isopropylmalate + NAD(+) = 4-methyl-2-oxopentanoate + CO2 + NADH. It participates in amino-acid biosynthesis; L-leucine biosynthesis; L-leucine from 3-methyl-2-oxobutanoate: step 3/4. Catalyzes the oxidation of 3-carboxy-2-hydroxy-4-methylpentanoate (3-isopropylmalate) to 3-carboxy-4-methyl-2-oxopentanoate. The product decarboxylates to 4-methyl-2 oxopentanoate. The sequence is that of 3-isopropylmalate dehydrogenase (leuB) from Mycobacterium tuberculosis (strain CDC 1551 / Oshkosh).